The sequence spans 294 residues: Large ribosomal subunit protein uL2c (294 aa).

The disordered stretch occupies residues 224 to 249 (VMNPVDHPHGGGGEGKSPIGRSRPVT).

It belongs to the universal ribosomal protein uL2 family. Part of the 50S ribosomal subunit.

It localises to the plastid. It is found in the chloroplast. The protein is Large ribosomal subunit protein uL2c (rpl2) of Porphyra purpurea (Red seaweed).